The sequence spans 305 residues: MQSPHIPVLLQEVLDAFDDFDSGDFLDCTLGYGGHSKALLQAHEKLRLIACDKDLEALNFSKEFLKKFQDRISFNHIGFKDILTQIPTQNLRGILADIGVSSLQLDKNDRGFSLNSDFLDMRMDQNNLLSAKEVVNSYSKEALEQIFKDYGDLAPVASMLTQKIINARSQKEITSAKELSQIIGNAKLKGRNVSLALLVFQALRIEVNNELGELKSLLENIEKAKLKDCKLAIISFHSLEDRIVKNTFKRWEKDCICDERAIKCECGKGHSLGKILSKKAISASKEEISYNSRSSCAKMRIFYFR.

Residues 33-35 (GGH), D52, D97, and Q104 each bind S-adenosyl-L-methionine.

This sequence belongs to the methyltransferase superfamily. RsmH family.

It localises to the cytoplasm. It carries out the reaction cytidine(1402) in 16S rRNA + S-adenosyl-L-methionine = N(4)-methylcytidine(1402) in 16S rRNA + S-adenosyl-L-homocysteine + H(+). Specifically methylates the N4 position of cytidine in position 1402 (C1402) of 16S rRNA. The polypeptide is Ribosomal RNA small subunit methyltransferase H (Campylobacter lari (strain RM2100 / D67 / ATCC BAA-1060)).